Reading from the N-terminus, the 220-residue chain is Protein CREG1 (220 aa).

An N-terminal signal peptide occupies residues 1–31 (MAGLSRGSARALLAALLASTLLALLVSPARG). 3 N-linked (GlcNAc...) asparagine glycosylation sites follow: Asn-160, Asn-193, and Asn-216.

The protein belongs to the CREG family. As to quaternary structure, homodimer. Interacts with IGF2R; the interaction is dependent on glycosylation. In terms of processing, N-glycosylated.

The protein resides in the secreted. May contribute to the transcriptional control of cell growth and differentiation. Antagonizes transcriptional activation and cellular transformation by the adenovirus E1A protein. The transcriptional control activity of cell growth requires interaction with IGF2R. The protein is Protein CREG1 (CREG1) of Homo sapiens (Human).